The sequence spans 372 residues: N-methyl-L-tryptophan oxidase (372 aa).

An FAD-binding site is contributed by 4-34 (DLIIIGSGSVGAAAGYYATRAGLNVLMTDAH). At C308 the chain carries S-8alpha-FAD cysteine.

The protein belongs to the MSOX/MTOX family. MTOX subfamily. Monomer. FAD is required as a cofactor.

The enzyme catalyses N(alpha)-methyl-L-tryptophan + O2 + H2O = L-tryptophan + formaldehyde + H2O2. Its function is as follows. Catalyzes the oxidative demethylation of N-methyl-L-tryptophan. The protein is N-methyl-L-tryptophan oxidase of Shigella sonnei (strain Ss046).